Consider the following 64-residue polypeptide: Cytochrome c oxidase subunit 5C-2 (64 aa).

Residues 15–34 (SVVKELVIGTVLGLAAGGLW) form a helical membrane-spanning segment.

The protein belongs to the cytochrome c oxidase subunit 5C family.

It localises to the mitochondrion inner membrane. This protein is one of the nuclear-coded polypeptide chains of cytochrome c oxidase, the terminal oxidase in mitochondrial electron transport. The chain is Cytochrome c oxidase subunit 5C-2 (COX5C2) from Helianthus annuus (Common sunflower).